The chain runs to 495 residues: Alpha-1B-glycoprotein (495 aa).

Residues 1–21 (MSMLVVFLLLWGVTWGPVTEA) form the signal peptide. 5 Ig-like V-type domains span residues 22-113 (AIFY…LTGP), 114-206 (KSLP…ELAA), 207-299 (PPPP…PVEL), 300-397 (ILSD…LHVD), and 398-495 (GPPP…VAES). Asparagine 44 carries N-linked (GlcNAc...) (complex) asparagine glycosylation. 5 disulfide bridges follow: cysteine 49/cysteine 93, cysteine 139/cysteine 182, cysteine 232/cysteine 279, cysteine 325/cysteine 374, and cysteine 423/cysteine 470. Asparagine 179 carries an N-linked (GlcNAc...) asparagine glycan. Residues asparagine 363 and asparagine 371 are each glycosylated (N-linked (GlcNAc...) asparagine).

In terms of assembly, interacts with CRISP3. As to expression, plasma.

The protein resides in the secreted. This is Alpha-1B-glycoprotein (A1BG) from Homo sapiens (Human).